Here is a 280-residue protein sequence, read N- to C-terminus: Phosphatidylserine decarboxylase proenzyme (280 aa).

Catalysis depends on charge relay system; for autoendoproteolytic cleavage activity residues Asp88, His144, and Ser247. Residue Ser247 is the Schiff-base intermediate with substrate; via pyruvic acid; for decarboxylase activity of the active site. The residue at position 247 (Ser247) is a Pyruvic acid (Ser); by autocatalysis.

The protein belongs to the phosphatidylserine decarboxylase family. PSD-B subfamily. Prokaryotic type I sub-subfamily. As to quaternary structure, heterodimer of a large membrane-associated beta subunit and a small pyruvoyl-containing alpha subunit. Requires pyruvate as cofactor. Is synthesized initially as an inactive proenzyme. Formation of the active enzyme involves a self-maturation process in which the active site pyruvoyl group is generated from an internal serine residue via an autocatalytic post-translational modification. Two non-identical subunits are generated from the proenzyme in this reaction, and the pyruvate is formed at the N-terminus of the alpha chain, which is derived from the carboxyl end of the proenzyme. The autoendoproteolytic cleavage occurs by a canonical serine protease mechanism, in which the side chain hydroxyl group of the serine supplies its oxygen atom to form the C-terminus of the beta chain, while the remainder of the serine residue undergoes an oxidative deamination to produce ammonia and the pyruvoyl prosthetic group on the alpha chain. During this reaction, the Ser that is part of the protease active site of the proenzyme becomes the pyruvoyl prosthetic group, which constitutes an essential element of the active site of the mature decarboxylase.

Its subcellular location is the cell membrane. The enzyme catalyses a 1,2-diacyl-sn-glycero-3-phospho-L-serine + H(+) = a 1,2-diacyl-sn-glycero-3-phosphoethanolamine + CO2. Its pathway is phospholipid metabolism; phosphatidylethanolamine biosynthesis; phosphatidylethanolamine from CDP-diacylglycerol: step 2/2. In terms of biological role, catalyzes the formation of phosphatidylethanolamine (PtdEtn) from phosphatidylserine (PtdSer). The protein is Phosphatidylserine decarboxylase proenzyme of Xanthomonas euvesicatoria pv. vesicatoria (strain 85-10) (Xanthomonas campestris pv. vesicatoria).